We begin with the raw amino-acid sequence, 90 residues long: Cell division protein CrgA (90 aa).

The tract at residues 1-26 (MPKAKVTKNSIAPVSSNPSANRTPVK) is disordered. Residues 7 to 26 (TKNSIAPVSSNPSANRTPVK) are compositionally biased toward polar residues. Helical transmembrane passes span 38 to 58 (VIMF…YLVG) and 69 to 89 (AWNY…TMGW).

This sequence belongs to the CrgA family.

Its subcellular location is the cell membrane. Involved in cell division. In Corynebacterium efficiens (strain DSM 44549 / YS-314 / AJ 12310 / JCM 11189 / NBRC 100395), this protein is Cell division protein CrgA.